A 101-amino-acid polypeptide reads, in one-letter code: Small ribosomal subunit protein bS18c (101 aa).

The protein belongs to the bacterial ribosomal protein bS18 family. As to quaternary structure, part of the 30S ribosomal subunit.

The protein localises to the plastid. It is found in the chloroplast. The sequence is that of Small ribosomal subunit protein bS18c from Panax ginseng (Korean ginseng).